We begin with the raw amino-acid sequence, 868 residues long: Facilitated trehalose transporter Tret1 (868 aa).

Disordered stretches follow at residues 1–213 (MSGR…QKAT) and 257–314 (KESS…LIHR). Residues 1 to 403 (MSGRDNRGAG…VYRPTTNPIY (403 aa)) are Cytoplasmic-facing. Over residues 25–43 (KLKEKLTRAGDDQGYHRVE) the composition is skewed to basic and acidic residues. 3 stretches are compositionally biased toward low complexity: residues 44-57 (SNLSTSNTATSLDT), 79-91 (PQQQQQQQRQQLR), and 117-126 (PFQQQQQRTP). 2 stretches are compositionally biased toward basic and acidic residues: residues 146-155 (EIREHRDRQQ) and 257-290 (KESSSEEEFHKTRREFQGRKHQSLDPRVTFKLDK). S259, S260, S261, S331, and S333 each carry phosphoserine. The disordered stretch occupies residues 335–367 (EDFHTSRQHFQQQRSISTDSRKSRRPYEMDEMG). Over residues 342-352 (QHFQQQRSIST) the composition is skewed to polar residues. Over residues 353-367 (DSRKSRRPYEMDEMG) the composition is skewed to basic and acidic residues. Residues 404 to 424 (IWTQVLAALSVSLGSLVVGFV) traverse the membrane as a helical segment. The Extracellular portion of the chain corresponds to 425-451 (SAYTSPALVSMTNRNMTSFEVTPQAAS). Residue N439 is glycosylated (N-linked (GlcNAc...) asparagine). Residues 452-472 (WVGGIMPLAGLAGGIAGGPFI) traverse the membrane as a helical segment. Residues 473 to 484 (EYLGRRNTILAT) are Cytoplasmic-facing. The chain crosses the membrane as a helical span at residues 485–505 (AIPFIVSSLLIACAVNVAMVL). Residues 506–508 (AGR) lie on the Extracellular side of the membrane. The helical transmembrane segment at 509 to 529 (FLAGFCVGIASLSLPVYLGET) threads the bilayer. The Cytoplasmic segment spans residues 530–535 (VQPEVR). A helical transmembrane segment spans residues 536–556 (GTLGLLPTAFGNIGILLCFVA). Topologically, residues 557-563 (GTYMDWS) are extracellular. The helical transmembrane segment at 564 to 584 (MLAFLGAALPVPFLILMFLIP) threads the bilayer. Residues 585 to 653 (ETPRWFVSRG…NLKPLSISLG (69 aa)) lie on the Cytoplasmic side of the membrane. The chain crosses the membrane as a helical span at residues 654-674 (LMFFQQLSGINAVIFYTVSIF). The Extracellular portion of the chain corresponds to 675-684 (KDAGSTIDGN). A helical membrane pass occupies residues 685–705 (LCTIIVGIVNFMATFIATLLI). At 706 to 711 (DRAGRK) the chain is on the cytoplasmic side. Residues 712-732 (ILLYVSNIAMIITLFVLGGFF) form a helical membrane-spanning segment. Topologically, residues 733–751 (YCKSHGQDVSQLGWLPLSC) are extracellular. Residues 752 to 772 (FVIYILGFSLGFGPIPWLMMG) traverse the membrane as a helical segment. The Cytoplasmic portion of the chain corresponds to 773–778 (EILPSK). Residues 779 to 799 (IRGSAASVATAFNWSCTFVVT) traverse the membrane as a helical segment. Residues 800-812 (KTFQDMIDFMGAH) are Extracellular-facing. The helical transmembrane segment at 813 to 833 (GAFWLFGSICFIGLFFVILYV) threads the bilayer. The Cytoplasmic segment spans residues 834-868 (PETQGKTLEDIERKMMGRVRRMSSVANMKPLAFNM). Phosphoserine occurs at positions 856 and 857.

This sequence belongs to the major facilitator superfamily. Sugar transporter (TC 2.A.1.1) family. Trehalose transporter subfamily.

The protein localises to the cell membrane. Functionally, low-capacity facilitative transporter for trehalose. Does not transport maltose, sucrose or lactose. Mediates the bidirectional transfer of trehalose. Responsible for the transport of trehalose synthesized in the fat body and the incorporation of trehalose into other tissues that require a carbon source, thereby regulating trehalose levels in the hemolymph. This Drosophila pseudoobscura pseudoobscura (Fruit fly) protein is Facilitated trehalose transporter Tret1.